The sequence spans 252 residues: 3-dehydroquinate dehydratase (252 aa).

Residues serine 21, 46–48 (EWR), and arginine 82 each bind 3-dehydroquinate. The active-site Proton donor/acceptor is the histidine 143. The active-site Schiff-base intermediate with substrate is lysine 170. 3 residues coordinate 3-dehydroquinate: arginine 213, serine 232, and glutamine 236.

Belongs to the type-I 3-dehydroquinase family. Homodimer.

It catalyses the reaction 3-dehydroquinate = 3-dehydroshikimate + H2O. It functions in the pathway metabolic intermediate biosynthesis; chorismate biosynthesis; chorismate from D-erythrose 4-phosphate and phosphoenolpyruvate: step 3/7. Its function is as follows. Involved in the third step of the chorismate pathway, which leads to the biosynthesis of aromatic amino acids. Catalyzes the cis-dehydration of 3-dehydroquinate (DHQ) and introduces the first double bond of the aromatic ring to yield 3-dehydroshikimate. This chain is 3-dehydroquinate dehydratase, found in Shigella boydii serotype 4 (strain Sb227).